A 926-amino-acid polypeptide reads, in one-letter code: Tyrosine-protein phosphatase non-receptor type 4 (926 aa).

Residues 29 to 312 (VVCNILLLDN…EHHTFFRLDR (284 aa)) enclose the FERM domain. Disordered stretches follow at residues 380-412 (DDRLETQSLPSRSPPGTPNHRNSTFTQEGTRLR) and 430-475 (EVFV…KNSW). 2 stretches are compositionally biased toward polar residues: residues 398 to 408 (NHRNSTFTQEG) and 430 to 456 (EVFVNQRSPSSTQANSIVLESSPSQET). The residue at position 474 (S474) is a Phosphoserine. A PDZ domain is found at 517–589 (LIRMKPDENG…DQVVLFIKAS (73 aa)). Positions 655-911 (VLTQFDQLYR…RFVCEAILKV (257 aa)) constitute a Tyrosine-protein phosphatase domain. Residues D820, 852–858 (CSAGIGR), and Q896 contribute to the substrate site. Residue C852 is the Phosphocysteine intermediate of the active site.

This sequence belongs to the protein-tyrosine phosphatase family. Non-receptor class subfamily. Interacts with MAPK12 (via C-terminus); this interaction abolishes PTPN4 catalytic autoinhibition and thus activates the phosphatase activity. In terms of assembly, (Microbial infection) Interacts with attenuated rabies virus protein G; this interaction is required for virally-induced apoptosis. Highly phosphorylated on serine and threonine residues but not on tyrosines. Post-translationally, cleaved and activated by calpain I/CAPN1.

It localises to the cell membrane. The protein resides in the cytoplasm. It is found in the cytoskeleton. The enzyme catalyses O-phospho-L-tyrosyl-[protein] + H2O = L-tyrosyl-[protein] + phosphate. Functionally, phosphatase that plays a role in immunity, learning, synaptic plasticity or cell homeostasis. Regulates neuronal cell homeostasis by protecting neurons against apoptosis. Negatively regulates TLR4-induced interferon beta production by dephosphorylating adapter TICAM2 and inhibiting subsequent TRAM-TRIF interaction. Also dephosphorylates the immunoreceptor tyrosine-based activation motifs/ITAMs of the TCR zeta subunit and thereby negatively regulates TCR-mediated signaling pathway. May act at junctions between the membrane and the cytoskeleton. This chain is Tyrosine-protein phosphatase non-receptor type 4 (PTPN4), found in Homo sapiens (Human).